The primary structure comprises 915 residues: Isoleucine--tRNA ligase (915 aa).

The 'HIGH' region signature appears at 57–67 (PYANGNLHMGH). Position 554 (glutamate 554) interacts with L-isoleucyl-5'-AMP. Residues 595-599 (KMSKS) carry the 'KMSKS' region motif. Position 598 (lysine 598) interacts with ATP. Residues cysteine 885, cysteine 888, cysteine 905, and cysteine 908 each coordinate Zn(2+).

Belongs to the class-I aminoacyl-tRNA synthetase family. IleS type 1 subfamily. As to quaternary structure, monomer. Requires Zn(2+) as cofactor.

Its subcellular location is the cytoplasm. The catalysed reaction is tRNA(Ile) + L-isoleucine + ATP = L-isoleucyl-tRNA(Ile) + AMP + diphosphate. Catalyzes the attachment of isoleucine to tRNA(Ile). As IleRS can inadvertently accommodate and process structurally similar amino acids such as valine, to avoid such errors it has two additional distinct tRNA(Ile)-dependent editing activities. One activity is designated as 'pretransfer' editing and involves the hydrolysis of activated Val-AMP. The other activity is designated 'posttransfer' editing and involves deacylation of mischarged Val-tRNA(Ile). The protein is Isoleucine--tRNA ligase of Staphylococcus carnosus (strain TM300).